We begin with the raw amino-acid sequence, 335 residues long: UPF0065 protein BB4329 (335 aa).

The N-terminal stretch at 1–39 is a signal peptide; that stretch reads MNKNIPAFHRRCHGLVQGLARTLLLAPVLLALSVPAAQA.

Belongs to the UPF0065 (bug) family.

Its subcellular location is the periplasm. This Bordetella bronchiseptica (strain ATCC BAA-588 / NCTC 13252 / RB50) (Alcaligenes bronchisepticus) protein is UPF0065 protein BB4329.